Consider the following 403-residue polypeptide: Phosphopentomutase (403 aa).

D13, D298, H303, D339, H340, and H351 together coordinate Mn(2+).

It belongs to the phosphopentomutase family. Mn(2+) is required as a cofactor.

It localises to the cytoplasm. The enzyme catalyses 2-deoxy-alpha-D-ribose 1-phosphate = 2-deoxy-D-ribose 5-phosphate. It catalyses the reaction alpha-D-ribose 1-phosphate = D-ribose 5-phosphate. Its pathway is carbohydrate degradation; 2-deoxy-D-ribose 1-phosphate degradation; D-glyceraldehyde 3-phosphate and acetaldehyde from 2-deoxy-alpha-D-ribose 1-phosphate: step 1/2. Isomerase that catalyzes the conversion of deoxy-ribose 1-phosphate (dRib-1-P) and ribose 1-phosphate (Rib-1-P) to deoxy-ribose 5-phosphate (dRib-5-P) and ribose 5-phosphate (Rib-5-P), respectively. The sequence is that of Phosphopentomutase from Streptococcus pneumoniae serotype 2 (strain D39 / NCTC 7466).